The primary structure comprises 474 residues: MSKEERLAKDITHALGGSQNISNIIHCMTRVRIKVHNDAKVNYDELKSINGVLGVVEDERIQVVVGPGIVNKVAKLMADQSGATLAEETTENQSYKSQAEKRAYEHKKQFQSQRKQSKWNKVLKSIANIFIPLIPAFIGAGLIGGIAAILSNLLTAGSISGQWIQQIVTVLNVIKDGMLFYLAIFTGINSAKVFGATPGLGGVIGGTTLLTGITDENPIKNIFTGEHLAAGQGGIIGVIFAVWLLSMVEKRLHKIIPNSIDIIVTPTITLLLIGLLTIFIIMPLAGFVSDGLVYVINWIIGVGGIFSGFIIGAFFLPLVMLGLHHIFTPIHIELINQTGSTYLLPIAAMAGAGQVGAAIALWVRCGKNKELRNTLKGALPVGFLGIGEPLIYGVTLPLGRPFFTACIGGGVGGAVIGGIGHIGATAVGPSGISLLPLIANNMYLGYIVGLLAAYAGGFIFTYFFGTTKEMRNPE.

In terms of domain architecture, PTS EIIB type-1 spans E5–E87. Residue C27 is the Phosphocysteine intermediate; for EIIB activity of the active site. In terms of domain architecture, PTS EIIC type-1 spans K124–E474. The next 10 membrane-spanning stretches (helical) occupy residues I129 to I149, I167 to G187, V193 to I213, L228 to V248, I268 to V288, I299 to V319, L343 to V363, A378 to L398, F402 to I422, and L444 to F464.

It localises to the cell membrane. The catalysed reaction is N-acetyl-beta-D-muramate-(1-&gt;4)-N-acetyl-D-glucosamine(out) + N(pros)-phospho-L-histidyl-[protein] = 6-phospho-N-acetyl-beta-D-muramate-(1-&gt;4)-N-acetyl-D-glucosamine(in) + L-histidyl-[protein]. The protein operates within cell wall biogenesis; peptidoglycan recycling. Functionally, the phosphoenolpyruvate-dependent sugar phosphotransferase system (sugar PTS), a major carbohydrate active transport system, catalyzes the phosphorylation of incoming sugar substrates concomitantly with their translocation across the cell membrane. This system is involved in the uptake and phosphorylation of MurNAc-GlcNAc, the principle peptidoglycan turnover product of S.aureus, yielding cytoplasmic MurNAc 6P-GlcNAc. The protein is PTS system MurNAc-GlcNAc-specific EIIBC component of Staphylococcus epidermidis (strain ATCC 35984 / DSM 28319 / BCRC 17069 / CCUG 31568 / BM 3577 / RP62A).